Reading from the N-terminus, the 160-residue chain is Transcription elongation factor GreA (160 aa).

Residues 50–70 (AAREQQSFNEGRIQELEAKLS) adopt a coiled-coil conformation.

The protein belongs to the GreA/GreB family.

Functionally, necessary for efficient RNA polymerase transcription elongation past template-encoded arresting sites. The arresting sites in DNA have the property of trapping a certain fraction of elongating RNA polymerases that pass through, resulting in locked ternary complexes. Cleavage of the nascent transcript by cleavage factors such as GreA or GreB allows the resumption of elongation from the new 3'terminus. GreA releases sequences of 2 to 3 nucleotides. The sequence is that of Transcription elongation factor GreA from Legionella pneumophila (strain Paris).